The following is a 66-amino-acid chain: UPF0337 protein BA_0987/GBAA_0987/BAS0923 (66 aa).

The tract at residues 1-22 (MSESGLKEQITGKVEKTKGQVK) is disordered. The span at 13–22 (KVEKTKGQVK) shows a compositional bias: basic and acidic residues.

Belongs to the UPF0337 (CsbD) family.

In Bacillus anthracis, this protein is UPF0337 protein BA_0987/GBAA_0987/BAS0923.